Consider the following 307-residue polypeptide: Plastid division protein PDV2 (307 aa).

Met1 carries the N-acetylmethionine modification. Residues 1-213 lie on the Cytoplasmic side of the membrane; sequence MEDEEGIGLI…SGGSSHGVIR (213 aa). Residues 28-66 form a disordered region; the sequence is SSTTVSDNGDGNEDLSPGEGRKSEIIGNQDKDFDSISSE. Over residues 46–61 the composition is skewed to basic and acidic residues; sequence EGRKSEIIGNQDKDFD. Residue Ser50 is modified to Phosphoserine. A coiled-coil region spans residues 76-103; the sequence is LLRIRDALEALESQLASLQNLRQRQQYE. Positions 174–206 are disordered; it reads HLPSKKKSDANGFGSGHVRNEAEAKSPNGGSGG. The helical transmembrane segment at 214–234 threads the bilayer; it reads FLGSVAKIVLPIIGVISLLSA. The Chloroplast intermembrane portion of the chain corresponds to 235–307; the sequence is SGYGPEMRKR…AKRDVTYGYG (73 aa). The interval 235-307 is ARC6 binding; sequence SGYGPEMRKR…AKRDVTYGYG (73 aa).

In terms of assembly, interacts (via C-terminus) with ARC6 (via C-terminus) in the chloroplast intermembrane space; this interaction induces ARC6 homodimerization and leads to the formation of a heterotetramer containing two ARC6 and two PDV2 subunits. Interacts with ARC5/DRP5B. As to expression, mostly expressed in young leaves.

Its subcellular location is the plastid. It localises to the chloroplast outer membrane. In terms of biological role, component of the plastid division machinery consisting in a binary fission accomplished by the simultaneous constriction of the FtsZ ring on the stromal side of the inner envelope membrane, and the ARC5/DRP5B ring on the cytosolic side of the outer envelope membrane. Positive factor of chloroplast division required, with a dosage effect, to mediate the recruitment and dimerization of ARC5/DRP5B at the midplastid constriction site in the cytoplasm at plastid outer envelope membranes (OEMs). Prevents ARC5/DRP5B GTPase acrivity. Relays plastid division site position between stroma and outer surface via interactions with the cytoplasmic ARC5/DRP5B and the inner membrane ARC6 that recruits stromal FtsZ ring. Binding to phosphatidylinositol 4-phosphate (PI4P) modulates negatively chloroplast division. The protein is Plastid division protein PDV2 of Arabidopsis thaliana (Mouse-ear cress).